The following is a 1275-amino-acid chain: Membrane-associated guanylate kinase, WW and PDZ domain-containing protein 2 (1275 aa).

Residues Glu-17–Gly-101 form the PDZ 1 domain. A Guanylate kinase-like domain is found at Arg-109–Lys-283. A disordered region spans residues Leu-203–Asp-305. A compositionally biased stretch (basic and acidic residues) spans Glu-280–Glu-295. WW domains lie at Asp-301 to Leu-334 and Asn-347 to Leu-380. The interaction with DDN stretch occupies residues Asp-301–Leu-380. Phosphotyrosine is present on Tyr-361. PDZ domains follow at residues Ser-425–Tyr-509 and Thr-604–Gly-682. Residue Ser-685 is modified to Phosphoserine. The disordered stretch occupies residues Glu-698 to Asp-740. Polar residues predominate over residues Asn-699–Ser-708. The region spanning Asp-777–Arg-859 is the PDZ 4 domain. Tyr-826 is subject to Phosphotyrosine. The interval Cys-868 to Ser-912 is disordered. A phosphoserine mark is found at Ser-883 and Ser-884. Residues Ser-893–Pro-907 are compositionally biased toward low complexity. The PDZ 5 domain maps to Asp-919–Glu-1009. A compositionally biased stretch (polar residues) spans Glu-1010 to Ala-1040. The interval Glu-1010–Asp-1128 is disordered. Position 1013 is a phosphoserine (Ser-1013). Positions Asn-1067 to Ile-1083 are enriched in basic and acidic residues. Residues Thr-1139–Thr-1221 enclose the PDZ 6 domain.

This sequence belongs to the MAGUK family. Interacts (via its WW domains) with DRPLA. Interacts (via its second PDZ domain) with PTEN (via unphosphorylated C-terminus); this interaction diminishes the degradation rate of PTEN. Interacts (via guanylate kinase domain) with DLGAP1. Interacts (via the PDZ domains) with GRIN2A, GRID2 and NLGN1. Interacts with CTNND2, CTNNB1 and MAGUIN-1. Interacts with ACVR2A, SMAD2 and SMAD3. Part of a complex consisting of MAGI2/ARIP1, ACVR2A, ACVR1B and SMAD3. May interact with HTR2A. Interacts with RAPGEF2. Identified in a complex with ACTN4, CASK, IQGAP1, NPHS1, SPTAN1 and SPTBN1. Interacts with DDN. Found in a complex, at least composed of KIDINS220, MAGI2, NTRK1 and RAPGEF2; the complex is mainly formed at late endosomes in a NGF-dependent manner. Interacts with RAPGEF2; the interaction occurs before or after nerve growth factor (NGF) stimulation. Interacts (via PDZ domain) with KIDINS220 (via C-terminal domain). Interacts with IGSF9 and HTR4. Interacts with DLL1. Found in a complex with IGSF9B and NLGN2; the interaction with IGSF9B is mediated via the PDZ 5 and PDZ 6 domains, while the interaction with NLGN2 is mediated via the WW1, WW2 and PDZ2 domains. Interacts (via PDZ 6 domain) with USH1G (via SAM domain); the interaction is triggered by phosphorylation of USH1G by CK2 and negatively regulates MAGI2-mediated endocytosis. Expressed throughout the retina except in the nuclear layers and the photoreceptor outer segments (at protein level). Highest retinal expression is observed in the outer plexiform layer, the outer limiting membrane and the inner segment of photoreceptor cells (at protein level). Expressed in brain.

It localises to the cytoplasm. The protein localises to the late endosome. It is found in the synapse. Its subcellular location is the synaptosome. The protein resides in the cell membrane. It localises to the cytoskeleton. The protein localises to the microtubule organizing center. It is found in the centrosome. Its subcellular location is the cell projection. The protein resides in the cilium. It localises to the centriole. The protein localises to the photoreceptor inner segment. It is found in the photoreceptor outer segment. Functionally, seems to act as a scaffold molecule at synaptic junctions by assembling neurotransmitter receptors and cell adhesion proteins. Plays a role in nerve growth factor (NGF)-induced recruitment of RAPGEF2 to late endosomes and neurite outgrowth. May play a role in regulating activin-mediated signaling in neuronal cells. Enhances the ability of PTEN to suppress AKT1 activation. Plays a role in receptor-mediated clathrin-dependent endocytosis which is required for ciliogenesis. The chain is Membrane-associated guanylate kinase, WW and PDZ domain-containing protein 2 (Magi2) from Mus musculus (Mouse).